A 133-amino-acid chain; its full sequence is Ribosome-binding factor A (133 aa).

The protein belongs to the RbfA family. In terms of assembly, monomer. Binds 30S ribosomal subunits, but not 50S ribosomal subunits or 70S ribosomes.

Its subcellular location is the cytoplasm. One of several proteins that assist in the late maturation steps of the functional core of the 30S ribosomal subunit. Associates with free 30S ribosomal subunits (but not with 30S subunits that are part of 70S ribosomes or polysomes). Required for efficient processing of 16S rRNA. May interact with the 5'-terminal helix region of 16S rRNA. The chain is Ribosome-binding factor A from Klebsiella pneumoniae (strain 342).